The primary structure comprises 384 residues: Chaperone protein DnaJ (384 aa).

The J domain maps to 5–69 (DYYKVLGVDR…QKRAQYDQFG (65 aa)). A CR-type zinc finger spans residues 141-223 (GKKTQVSYTR…CGGKGTVERK (83 aa)). Zn(2+) is bound by residues cysteine 154, cysteine 157, cysteine 171, cysteine 174, cysteine 197, cysteine 200, cysteine 211, and cysteine 214. CXXCXGXG motif repeat units follow at residues 154 to 161 (CETCGGNG), 171 to 178 (CDKCHGTG), 197 to 204 (CDKCNGRG), and 211 to 218 (CKTCGGKG).

Belongs to the DnaJ family. In terms of assembly, homodimer. The cofactor is Zn(2+).

Its subcellular location is the cytoplasm. Its function is as follows. Participates actively in the response to hyperosmotic and heat shock by preventing the aggregation of stress-denatured proteins and by disaggregating proteins, also in an autonomous, DnaK-independent fashion. Unfolded proteins bind initially to DnaJ; upon interaction with the DnaJ-bound protein, DnaK hydrolyzes its bound ATP, resulting in the formation of a stable complex. GrpE releases ADP from DnaK; ATP binding to DnaK triggers the release of the substrate protein, thus completing the reaction cycle. Several rounds of ATP-dependent interactions between DnaJ, DnaK and GrpE are required for fully efficient folding. Also involved, together with DnaK and GrpE, in the DNA replication of plasmids through activation of initiation proteins. This Lactobacillus acidophilus (strain ATCC 700396 / NCK56 / N2 / NCFM) protein is Chaperone protein DnaJ.